The primary structure comprises 60 residues: Conotoxin VnMRCL-012 (60 aa).

An N-terminal signal peptide occupies residues 1 to 22 (MRCLPVFVILLLLIASAPGVDA). Residues 23 to 50 (QPKTKYDVPLASRHDFAKKTPKRLSKPR) constitute a propeptide that is removed on maturation.

It belongs to the conotoxin T superfamily. Post-translationally, contains 2 disulfide bonds that can be either 'C1-C3, C2-C4' or 'C1-C4, C2-C3', since these disulfide connectivities have been observed for conotoxins with cysteine framework V (for examples, see AC P0DQQ7 and AC P81755). In terms of tissue distribution, expressed by the venom duct.

It localises to the secreted. The chain is Conotoxin VnMRCL-012 from Conus ventricosus (Mediterranean cone).